A 637-amino-acid chain; its full sequence is 1-deoxy-D-xylulose-5-phosphate synthase (637 aa).

Residues H76 and 117-119 each bind thiamine diphosphate; that span reads GHS. D148 contributes to the Mg(2+) binding site. Thiamine diphosphate-binding positions include 149–150, N177, Y294, and E381; that span reads GA. N177 lines the Mg(2+) pocket.

It belongs to the transketolase family. DXPS subfamily. Homodimer. Mg(2+) is required as a cofactor. The cofactor is thiamine diphosphate.

It catalyses the reaction D-glyceraldehyde 3-phosphate + pyruvate + H(+) = 1-deoxy-D-xylulose 5-phosphate + CO2. It functions in the pathway metabolic intermediate biosynthesis; 1-deoxy-D-xylulose 5-phosphate biosynthesis; 1-deoxy-D-xylulose 5-phosphate from D-glyceraldehyde 3-phosphate and pyruvate: step 1/1. In terms of biological role, catalyzes the acyloin condensation reaction between C atoms 2 and 3 of pyruvate and glyceraldehyde 3-phosphate to yield 1-deoxy-D-xylulose-5-phosphate (DXP). This Neisseria gonorrhoeae (strain ATCC 700825 / FA 1090) protein is 1-deoxy-D-xylulose-5-phosphate synthase.